We begin with the raw amino-acid sequence, 1000 residues long: UPF0182 protein SCO5204 (1000 aa).

7 consecutive transmembrane segments (helical) span residues 26 to 48, 70 to 92, 121 to 143, 177 to 199, 220 to 237, 267 to 289, and 296 to 318; these read LLLT…GFWT, IGLF…WLAH, WLLL…GQWR, FLLG…THYL, LSVL…AYWL, LPAK…ATLW, and PVIG…PALV. Disordered stretches follow at residues 884–908 and 943–1000; these read AETE…NPTV and EALQ…ADTG. The span at 888-897 shows a compositional bias: acidic residues; sequence QPPDEGDDTT. 2 stretches are compositionally biased toward basic and acidic residues: residues 943–953 and 963–984; these read EALQRAEDAQA and NGDD…DKAG.

The protein belongs to the UPF0182 family.

The protein resides in the cell membrane. The polypeptide is UPF0182 protein SCO5204 (Streptomyces coelicolor (strain ATCC BAA-471 / A3(2) / M145)).